A 443-amino-acid polypeptide reads, in one-letter code: Glutamate--tRNA ligase 2 (443 aa).

A 'HIGH' region motif is present at residues 7 to 17; the sequence is PSPTGLIHVGN. A 'KMSKS' region motif is present at residues 240 to 244; that stretch reads KLSKR. Lys243 contributes to the ATP binding site.

Belongs to the class-I aminoacyl-tRNA synthetase family. Glutamate--tRNA ligase type 1 subfamily. As to quaternary structure, monomer.

The protein localises to the cytoplasm. It carries out the reaction tRNA(Glu) + L-glutamate + ATP = L-glutamyl-tRNA(Glu) + AMP + diphosphate. Catalyzes the attachment of glutamate to tRNA(Glu) in a two-step reaction: glutamate is first activated by ATP to form Glu-AMP and then transferred to the acceptor end of tRNA(Glu). This is Glutamate--tRNA ligase 2 from Gluconacetobacter diazotrophicus (strain ATCC 49037 / DSM 5601 / CCUG 37298 / CIP 103539 / LMG 7603 / PAl5).